The chain runs to 172 residues: Protein-export protein SecB (172 aa).

Positions 153-172 (AQGQGGDSGIVMPDGSQARH) are disordered.

Belongs to the SecB family. Homotetramer, a dimer of dimers. One homotetramer interacts with 1 SecA dimer.

It localises to the cytoplasm. In terms of biological role, one of the proteins required for the normal export of preproteins out of the cell cytoplasm. It is a molecular chaperone that binds to a subset of precursor proteins, maintaining them in a translocation-competent state. It also specifically binds to its receptor SecA. The sequence is that of Protein-export protein SecB from Cupriavidus metallidurans (strain ATCC 43123 / DSM 2839 / NBRC 102507 / CH34) (Ralstonia metallidurans).